The primary structure comprises 322 residues: NAD(P)H-dependent D-xylose reductase (322 aa).

The active-site Proton donor is the Tyr-52. His-114 contacts substrate. NAD(+) is bound by residues 169-170 (SN), 218-227 (SSFGPQSFVE), and 274-284 (KSNLPERLVQN).

It belongs to the aldo/keto reductase family. As to quaternary structure, homodimer.

The catalysed reaction is xylitol + NAD(+) = D-xylose + NADH + H(+). It carries out the reaction xylitol + NADP(+) = D-xylose + NADPH + H(+). Its pathway is carbohydrate metabolism; D-xylose degradation. Its function is as follows. Reduces D-xylose into xylitol. Has a preference for NADPH, but can also utilize NADH as cosubstrate. This Candida tenuis (Yeast) protein is NAD(P)H-dependent D-xylose reductase (XYL1).